The following is a 271-amino-acid chain: Protein MGF 360-15R (271 aa).

It belongs to the asfivirus MGF 360 family.

Functionally, plays a role in virus cell tropism, and may be required for efficient virus replication in macrophages. This chain is Protein MGF 360-15R, found in African swine fever virus (isolate Tick/Malawi/Lil 20-1/1983) (ASFV).